Consider the following 564-residue polypeptide: Eukaryotic translation initiation factor 3 subunit L (564 aa).

Serine 2 carries the N-acetylserine modification. Residue serine 21 is modified to Phosphoserine. Positions 331-537 constitute a PCI domain; the sequence is DAIRVFANIL…IHIADTKVAR (207 aa). N6-acetyllysine is present on residues lysine 465 and lysine 549.

Component of the eukaryotic translation initiation factor 3 (eIF-3) complex, which is composed of 13 subunits: EIF3A, EIF3B, EIF3C, EIF3D, EIF3E, EIF3F, EIF3G, EIF3H, EIF3I, EIF3J, EIF3K, EIF3L and EIF3M. The eIF-3 complex appears to include 3 stable modules: module A is composed of EIF3A, EIF3B, EIF3G and EIF3I; module B is composed of EIF3F, EIF3H, and EIF3M; and module C is composed of EIF3C, EIF3D, EIF3E, EIF3K and EIF3L. EIF3C of module C binds EIF3B of module A and EIF3H of module B, thereby linking the three modules. EIF3J is a labile subunit that binds to the eIF-3 complex via EIF3B. The eIF-3 complex interacts with RPS6KB1 under conditions of nutrient depletion. Mitogenic stimulation leads to binding and activation of a complex composed of MTOR and RPTOR, leading to phosphorylation and release of RPS6KB1 and binding of EIF4B to eIF-3. Interacts with RRN3.

It is found in the cytoplasm. Functionally, component of the eukaryotic translation initiation factor 3 (eIF-3) complex, which is required for several steps in the initiation of protein synthesis. The eIF-3 complex associates with the 40S ribosome and facilitates the recruitment of eIF-1, eIF-1A, eIF-2:GTP:methionyl-tRNAi and eIF-5 to form the 43S pre-initiation complex (43S PIC). The eIF-3 complex stimulates mRNA recruitment to the 43S PIC and scanning of the mRNA for AUG recognition. The eIF-3 complex is also required for disassembly and recycling of post-termination ribosomal complexes and subsequently prevents premature joining of the 40S and 60S ribosomal subunits prior to initiation. The eIF-3 complex specifically targets and initiates translation of a subset of mRNAs involved in cell proliferation, including cell cycling, differentiation and apoptosis, and uses different modes of RNA stem-loop binding to exert either translational activation or repression. (Microbial infection) In case of FCV infection, plays a role in the ribosomal termination-reinitiation event leading to the translation of VP2. In Homo sapiens (Human), this protein is Eukaryotic translation initiation factor 3 subunit L.